The chain runs to 259 residues: Dihydroorotate dehydrogenase B (NAD(+)), electron transfer subunit (259 aa).

Residues 1–101 (MKIEDCTVEE…MGPLGRGYDV (101 aa)) form the FAD-binding FR-type domain. FAD-binding positions include 52–55 (RPIS), 69–71 (IYR), and 76–77 (GT). Positions 223, 228, 231, and 245 each coordinate [2Fe-2S] cluster.

This sequence belongs to the PyrK family. Heterotetramer of 2 PyrK and 2 PyrD type B subunits. Requires [2Fe-2S] cluster as cofactor. FAD serves as cofactor.

It participates in pyrimidine metabolism; UMP biosynthesis via de novo pathway; orotate from (S)-dihydroorotate (NAD(+) route): step 1/1. Responsible for channeling the electrons from the oxidation of dihydroorotate from the FMN redox center in the PyrD type B subunit to the ultimate electron acceptor NAD(+). This Fusobacterium nucleatum subsp. nucleatum (strain ATCC 25586 / DSM 15643 / BCRC 10681 / CIP 101130 / JCM 8532 / KCTC 2640 / LMG 13131 / VPI 4355) protein is Dihydroorotate dehydrogenase B (NAD(+)), electron transfer subunit.